Reading from the N-terminus, the 529-residue chain is Calcium/calmodulin-dependent protein kinase type II subunit gamma (529 aa).

The Protein kinase domain occupies 14 to 272 (YQLFEELGKG…ADQALKHPWV (259 aa)). Residues 20 to 28 (LGKGAFSVV) and lysine 43 each bind ATP. The active-site Proton acceptor is the aspartate 136. The interval 283-292 (HRQETVECLR) is autoinhibitory domain. 3 positions are modified to phosphothreonine; by autocatalysis: threonine 287, threonine 306, and threonine 307. Positions 294–316 (FNARRKLKGAILTTMLVSRNFSA) are calmodulin-binding. A phosphoserine mark is found at serine 311, serine 334, serine 349, serine 352, and serine 455. Positions 324–353 (KSDGGVKKRKSSSSVHLMPQSNNKNSLVSP) are disordered. The span at 342 to 352 (PQSNNKNSLVS) shows a compositional bias: polar residues.

The protein belongs to the protein kinase superfamily. CAMK Ser/Thr protein kinase family. CaMK subfamily. As to quaternary structure, CAMK2 is composed of 4 different chains: alpha (CAMK2A), beta (CAMK2B), gamma (CAMK2G), and delta (CAMK2D). The different isoforms assemble into homo- or heteromultimeric holoenzymes composed of 12 subunits with two hexameric rings stacked one on top of the other. In terms of processing, autophosphorylation of Thr-287 following activation by Ca(2+)/calmodulin. Phosphorylation of Thr-287 locks the kinase into an activated state.

The protein resides in the sarcoplasmic reticulum membrane. The enzyme catalyses L-seryl-[protein] + ATP = O-phospho-L-seryl-[protein] + ADP + H(+). It catalyses the reaction L-threonyl-[protein] + ATP = O-phospho-L-threonyl-[protein] + ADP + H(+). Its activity is regulated as follows. Activated by Ca(2+)/calmodulin. Binding of calmodulin results in conformational change that relieves intrasteric autoinhibition and allows autophosphorylation of Thr-287 which turns the kinase in a constitutively active form and confers to the kinase a Ca(2+)-independent activity. Calcium/calmodulin-dependent protein kinase that functions autonomously after Ca(2+)/calmodulin-binding and autophosphorylation, and is involved in sarcoplasmic reticulum Ca(2+) transport in skeletal muscle and may function in dendritic spine and synapse formation and neuronal plasticity. In slow-twitch muscles, is involved in regulation of sarcoplasmic reticulum (SR) Ca(2+) transport and in fast-twitch muscle participates in the control of Ca(2+) release from the SR through phosphorylation of the ryanodine receptor-coupling factor triadin. In the central nervous system, it is involved in the regulation of neurite formation and arborization. It may participate in the promotion of dendritic spine and synapse formation and maintenance of synaptic plasticity which enables long-term potentiation (LTP) and hippocampus-dependent learning. In response to interferon-gamma (IFN-gamma) stimulation, catalyzes phosphorylation of STAT1, stimulating the JAK-STAT signaling pathway. This is Calcium/calmodulin-dependent protein kinase type II subunit gamma (Camk2g) from Mus musculus (Mouse).